The primary structure comprises 508 residues: Putative inorganic phosphate transporter 1-13 (508 aa).

Residues 1–22 (MAGNQQLRVLHALDIARTQLYH) are Cytoplasmic-facing. The helical transmembrane segment at 23-43 (FIAIVIAGMGFFTDAYDLFSI) threads the bilayer. Over 44–64 (SLVADLLGHVYYHGELPRNIH) the chain is Extracellular. The chain crosses the membrane as a helical span at residues 65 to 85 (AAVTGIALCGTVPGQLVFGWL). Over 86–93 (GDKMGRKR) the chain is Cytoplasmic. A helical membrane pass occupies residues 94-114 (VYGITLLLMVVSSLASGLSFS). Over 115–117 (KHE) the chain is Extracellular. Residues 118–138 (GMNIIAVLCFFRFWLGVSIGG) form a helical membrane-spanning segment. The Cytoplasmic portion of the chain corresponds to 139 to 159 (DYPLSATIMSEYANKRTRGAF). The helical transmembrane segment at 160–180 (IAAVFAMQGFGNLAAGIIGMI) threads the bilayer. Residues 181-192 (VSAAFKHSSASK) are Extracellular-facing. Residues 193-213 (IDYAWRIILMFGAIPAALTYH) traverse the membrane as a helical segment. The Cytoplasmic segment spans residues 214–277 (WRMKMPETAR…FEFLHRHGLH (64 aa)). Residues 278–298 (LLGTTVCWFVLDVTFYSLNIF) traverse the membrane as a helical segment. Residues 299–328 (MKNIFTEVGLLPRLDSEYHHTLQRMITMTA) lie on the Extracellular side of the membrane. The helical transmembrane segment at 329 to 349 (VHTFISLCGALPGYFFTVAFV) threads the bilayer. The Cytoplasmic segment spans residues 350–354 (DRIGR). Residues 355 to 375 (VKIQLIGFTMMTVFMLCLAIP) traverse the membrane as a helical segment. Over 376 to 389 (YDQWLRHKNKYGFA) the chain is Extracellular. A helical membrane pass occupies residues 390-410 (VMYGLTFFFANFGPNTTTFII). Over 411-424 (PAEIFPARLRSTCH) the chain is Cytoplasmic. Residues 425 to 445 (GISGAVGKIGAIVGVFGFLYT) traverse the membrane as a helical segment. The Extracellular portion of the chain corresponds to 446–450 (EYHIR). A helical transmembrane segment spans residues 451–471 (IFLFVLIGCNLVGFIFTLLLP). The Cytoplasmic segment spans residues 472 to 508 (ESKGKSLEDLTGEIEEFQEEDEGSEVALSRPIHTVPL).

The protein belongs to the major facilitator superfamily. Phosphate:H(+) symporter (TC 2.A.1.9) family.

Its subcellular location is the membrane. In terms of biological role, high-affinity transporter for external inorganic phosphate. The sequence is that of Putative inorganic phosphate transporter 1-13 (PHT1-13) from Oryza sativa subsp. japonica (Rice).